The following is a 214-amino-acid chain: Orotate phosphoribosyltransferase (214 aa).

5-phospho-alpha-D-ribose 1-diphosphate is bound at residue Lys-26. Orotate is bound at residue 34-35 (FF). Residues 72-73 (YK), Arg-99, Lys-100, Lys-103, His-105, and 124-132 (DDVITAGTA) contribute to the 5-phospho-alpha-D-ribose 1-diphosphate site. Positions 128 and 156 each coordinate orotate.

The protein belongs to the purine/pyrimidine phosphoribosyltransferase family. PyrE subfamily. Homodimer. The cofactor is Mg(2+).

The enzyme catalyses orotidine 5'-phosphate + diphosphate = orotate + 5-phospho-alpha-D-ribose 1-diphosphate. It participates in pyrimidine metabolism; UMP biosynthesis via de novo pathway; UMP from orotate: step 1/2. Functionally, catalyzes the transfer of a ribosyl phosphate group from 5-phosphoribose 1-diphosphate to orotate, leading to the formation of orotidine monophosphate (OMP). In Actinobacillus succinogenes (strain ATCC 55618 / DSM 22257 / CCUG 43843 / 130Z), this protein is Orotate phosphoribosyltransferase.